We begin with the raw amino-acid sequence, 225 residues long: NAD(P)H-quinone oxidoreductase subunit K, chloroplastic (225 aa).

Cys43, Cys44, Cys108, and Cys139 together coordinate [4Fe-4S] cluster.

This sequence belongs to the complex I 20 kDa subunit family. In terms of assembly, NDH is composed of at least 16 different subunits, 5 of which are encoded in the nucleus. [4Fe-4S] cluster is required as a cofactor.

It is found in the plastid. The protein localises to the chloroplast thylakoid membrane. It catalyses the reaction a plastoquinone + NADH + (n+1) H(+)(in) = a plastoquinol + NAD(+) + n H(+)(out). The catalysed reaction is a plastoquinone + NADPH + (n+1) H(+)(in) = a plastoquinol + NADP(+) + n H(+)(out). Functionally, NDH shuttles electrons from NAD(P)H:plastoquinone, via FMN and iron-sulfur (Fe-S) centers, to quinones in the photosynthetic chain and possibly in a chloroplast respiratory chain. The immediate electron acceptor for the enzyme in this species is believed to be plastoquinone. Couples the redox reaction to proton translocation, and thus conserves the redox energy in a proton gradient. The sequence is that of NAD(P)H-quinone oxidoreductase subunit K, chloroplastic from Nymphaea alba (White water-lily).